Reading from the N-terminus, the 1009-residue chain is Type VII secretion system accessory factor EsaA (1009 aa).

Helical transmembrane passes span 7-27 (IYALIVTLIIIIAIVSMIFFV), 822-842 (ISPTLFVLLMYLLSMITAYIF), 869-889 (VITSGVIGTTGLVEGLIVGLI), 903-923 (KFILMVILTMMVFVLINTYLL), 928-948 (SIGMFLMIAALGLYFVAMNNL), and 979-999 (IGLALVILTVLVIIGFVLNMF).

Belongs to the EsaA family. As to quaternary structure, homodimer. Interacts with EssB.

The protein resides in the cell membrane. In terms of biological role, component of the type VII secretion system (Ess). Provides together with EssB and other components such as EssC and EssE a secretion platform across the cytoplasmic membrane in the host. This chain is Type VII secretion system accessory factor EsaA, found in Staphylococcus aureus (strain MSSA476).